The chain runs to 555 residues: Protein tyrosine phosphatase-like protein egg-3 (555 aa).

Short sequence motifs (D-box) lie at residues arginine 96 to leucine 99 and arginine 130 to leucine 133. The 308-residue stretch at phenylalanine 207–tryptophan 514 folds into the Tyrosine-protein phosphatase domain. The RXXL motif; required for cortical localization signature appears at arginine 253–leucine 256. The short motif at arginine 266–leucine 269 is the RXXL motif element. Short sequence motifs (RXXL motif; required for cortical localization) lie at residues arginine 509–leucine 512 and arginine 525–leucine 528.

The protein belongs to the protein-tyrosine phosphatase family. Part of a complex, consisting of pseudophosphatases egg-3, egg-4, egg-5 and kinase mbk-2; this complex is required for the oocyte-to-zygote transition. Interacts (via tyrosine-protein phosphatase domain) with kinase mbk-2 (via N-terminus); the interaction does not affect mbk-2 kinase activity, is enhanced by mbk-2 tyrosine phosphorylation status and requires prior binding of mbk-2 to egg-4 and egg-5. Interacts with egg-4.

It is found in the cytoplasm. Its subcellular location is the cell cortex. Its function is as follows. Probable pseudophosphatase required for the oocyte-to-zygote transition during which it regulates the polarized dispersal of the cortical actin cytoskeleton, the synthesis of the eggshell chitin layer and the formation of the polar bodies after meiosis I and II. Acts as a scaffold to tether kinase mbk-2 and pseudophosphatases egg-4 and egg-5 to the oocyte cortex and thus restricts mbk-2 activity to the cortex during meiosis I. Regulates mbk-2 localization to cytoplasmic foci during meiosis II. Also required for chitin synthase chs-1 localization to the cell cortex of unfertilized oocytes and to cytoplasmic foci in the fertilized embryo. The sequence is that of Protein tyrosine phosphatase-like protein egg-3 from Caenorhabditis elegans.